The sequence spans 79 residues: CDC42 small effector protein 1 (79 aa).

Residues Cys-10 and Cys-11 are each lipidated (S-palmitoyl cysteine). One can recognise a CRIB domain in the interval 30 to 43; the sequence is IGEPMNFVHLTHIG. The interval 48–79 is disordered; that stretch reads GAGDGLAMTGAVQEQMRSKGNRDRPWSNSRGL. A compositionally biased stretch (basic and acidic residues) spans 63–72; the sequence is MRSKGNRDRP.

It belongs to the CDC42SE/SPEC family. Interacts with CDC42 (in GTP-bound form). Interacts weakly with RAC1 and not at all with RHOA.

The protein resides in the cytoplasm. It localises to the cytoskeleton. The protein localises to the cell membrane. In terms of biological role, probably involved in the organization of the actin cytoskeleton by acting downstream of CDC42, inducing actin filament assembly. Alters CDC42-induced cell shape changes. In activated T-cells, may play a role in CDC42-mediated F-actin accumulation at the immunological synapse. May play a role in early contractile events in phagocytosis in macrophages. In Pongo abelii (Sumatran orangutan), this protein is CDC42 small effector protein 1 (CDC42SE1).